We begin with the raw amino-acid sequence, 322 residues long: Phosphatidylserine decarboxylase proenzyme (322 aa).

Active-site charge relay system; for autoendoproteolytic cleavage activity residues include Asp-90, His-147, and Ser-254. The active-site Schiff-base intermediate with substrate; via pyruvic acid; for decarboxylase activity is the Ser-254. Ser-254 is modified (pyruvic acid (Ser); by autocatalysis). Residues 294 to 322 form a disordered region; that stretch reads EAEPAPLPEEEINAEHDASPLVDDKKDES. The segment covering 306 to 322 has biased composition (basic and acidic residues); that stretch reads NAEHDASPLVDDKKDES.

The protein belongs to the phosphatidylserine decarboxylase family. PSD-B subfamily. Prokaryotic type I sub-subfamily. As to quaternary structure, heterodimer of a large membrane-associated beta subunit and a small pyruvoyl-containing alpha subunit. It depends on pyruvate as a cofactor. Post-translationally, is synthesized initially as an inactive proenzyme. Formation of the active enzyme involves a self-maturation process in which the active site pyruvoyl group is generated from an internal serine residue via an autocatalytic post-translational modification. Two non-identical subunits are generated from the proenzyme in this reaction, and the pyruvate is formed at the N-terminus of the alpha chain, which is derived from the carboxyl end of the proenzyme. The autoendoproteolytic cleavage occurs by a canonical serine protease mechanism, in which the side chain hydroxyl group of the serine supplies its oxygen atom to form the C-terminus of the beta chain, while the remainder of the serine residue undergoes an oxidative deamination to produce ammonia and the pyruvoyl prosthetic group on the alpha chain. During this reaction, the Ser that is part of the protease active site of the proenzyme becomes the pyruvoyl prosthetic group, which constitutes an essential element of the active site of the mature decarboxylase.

The protein localises to the cell membrane. The catalysed reaction is a 1,2-diacyl-sn-glycero-3-phospho-L-serine + H(+) = a 1,2-diacyl-sn-glycero-3-phosphoethanolamine + CO2. Its pathway is phospholipid metabolism; phosphatidylethanolamine biosynthesis; phosphatidylethanolamine from CDP-diacylglycerol: step 2/2. In terms of biological role, catalyzes the formation of phosphatidylethanolamine (PtdEtn) from phosphatidylserine (PtdSer). The sequence is that of Phosphatidylserine decarboxylase proenzyme from Citrobacter koseri (strain ATCC BAA-895 / CDC 4225-83 / SGSC4696).